The following is a 318-amino-acid chain: NADH-ubiquinone oxidoreductase chain 1 (318 aa).

Helical transmembrane passes span 2–22 (FTIN…FLTL), 70–90 (LYMA…TPLP), 98–118 (FNLG…SILW), 140–160 (ISYG…SGSF), 173–193 (WLLL…LAET), 217–237 (AGSF…MNAL), 253–273 (ELYT…FLWI), and 294–314 (LPLT…LSGI).

It belongs to the complex I subunit 1 family.

The protein resides in the mitochondrion inner membrane. The catalysed reaction is a ubiquinone + NADH + 5 H(+)(in) = a ubiquinol + NAD(+) + 4 H(+)(out). Core subunit of the mitochondrial membrane respiratory chain NADH dehydrogenase (Complex I) that is believed to belong to the minimal assembly required for catalysis. Complex I functions in the transfer of electrons from NADH to the respiratory chain. The immediate electron acceptor for the enzyme is believed to be ubiquinone. The polypeptide is NADH-ubiquinone oxidoreductase chain 1 (MT-ND1) (Sapajus apella (Brown-capped capuchin)).